The chain runs to 57 residues: MIKWAIIFAIIGLIAGALGFGGMAGAAMGIAKFLFWAGIIIAIVLFVLGMTIAKKVI.

A run of 2 helical transmembrane segments spans residues 4–24 (WAIIFAIIGLIAGALGFGGMA) and 33–53 (FLFWAGIIIAIVLFVLGMTIA).

It belongs to the UPF0391 family.

The protein resides in the cell membrane. The polypeptide is UPF0391 membrane protein XOO1885 (Xanthomonas oryzae pv. oryzae (strain KACC10331 / KXO85)).